A 355-amino-acid chain; its full sequence is UDP-N-acetylglucosamine--N-acetylmuramyl-(pentapeptide) pyrophosphoryl-undecaprenol N-acetylglucosamine transferase (355 aa).

UDP-N-acetyl-alpha-D-glucosamine-binding positions include 11 to 13 (TGG), N120, R161, S188, and Q280.

The protein belongs to the glycosyltransferase 28 family. MurG subfamily.

It is found in the cell inner membrane. The catalysed reaction is di-trans,octa-cis-undecaprenyl diphospho-N-acetyl-alpha-D-muramoyl-L-alanyl-D-glutamyl-meso-2,6-diaminopimeloyl-D-alanyl-D-alanine + UDP-N-acetyl-alpha-D-glucosamine = di-trans,octa-cis-undecaprenyl diphospho-[N-acetyl-alpha-D-glucosaminyl-(1-&gt;4)]-N-acetyl-alpha-D-muramoyl-L-alanyl-D-glutamyl-meso-2,6-diaminopimeloyl-D-alanyl-D-alanine + UDP + H(+). The protein operates within cell wall biogenesis; peptidoglycan biosynthesis. Cell wall formation. Catalyzes the transfer of a GlcNAc subunit on undecaprenyl-pyrophosphoryl-MurNAc-pentapeptide (lipid intermediate I) to form undecaprenyl-pyrophosphoryl-MurNAc-(pentapeptide)GlcNAc (lipid intermediate II). The chain is UDP-N-acetylglucosamine--N-acetylmuramyl-(pentapeptide) pyrophosphoryl-undecaprenol N-acetylglucosamine transferase from Prochlorococcus marinus (strain MIT 9211).